We begin with the raw amino-acid sequence, 415 residues long: Thyroxine-binding globulin (415 aa).

The signal sequence occupies residues 1 to 20 (MSPFLYLVLLVLGLHATIHC). N-linked (GlcNAc...) asparagine glycosylation is found at asparagine 36, asparagine 99, asparagine 165, and asparagine 253. Thyroxine contacts are provided by asparagine 293 and arginine 398.

It belongs to the serpin family.

It is found in the secreted. In terms of biological role, major thyroid hormone transport protein in serum. The protein is Thyroxine-binding globulin (SERPINA7) of Pan troglodytes (Chimpanzee).